The following is a 122-amino-acid chain: UPF0102 protein RHE_CH00320 (122 aa).

This sequence belongs to the UPF0102 family.

This is UPF0102 protein RHE_CH00320 from Rhizobium etli (strain ATCC 51251 / DSM 11541 / JCM 21823 / NBRC 15573 / CFN 42).